The sequence spans 152 residues: Transcriptional regulator MraZ (152 aa).

2 SpoVT-AbrB domains span residues 5-52 and 81-124; these read ASAI…PIHE and AHEV…DEQS.

The protein belongs to the MraZ family. As to quaternary structure, forms oligomers.

It localises to the cytoplasm. The protein resides in the nucleoid. This chain is Transcriptional regulator MraZ, found in Shewanella baltica (strain OS195).